Consider the following 120-residue polypeptide: Large ribosomal subunit protein uL22 (120 aa).

Residues 1 to 25 are disordered; the sequence is MFVNKKYTAKGKNLPSSPKKVRPIA.

It belongs to the universal ribosomal protein uL22 family. In terms of assembly, part of the 50S ribosomal subunit.

Its function is as follows. This protein binds specifically to 23S rRNA; its binding is stimulated by other ribosomal proteins, e.g. L4, L17, and L20. It is important during the early stages of 50S assembly. It makes multiple contacts with different domains of the 23S rRNA in the assembled 50S subunit and ribosome. In terms of biological role, the globular domain of the protein is located near the polypeptide exit tunnel on the outside of the subunit, while an extended beta-hairpin is found that lines the wall of the exit tunnel in the center of the 70S ribosome. The protein is Large ribosomal subunit protein uL22 of Borrelia recurrentis (strain A1).